A 119-amino-acid chain; its full sequence is Putative transmembrane protein ORF119 (119 aa).

The next 3 membrane-spanning stretches (helical) occupy residues 9 to 29 (TLAIALVFLGISLIFLVPAMV), 73 to 93 (QYAGIYTLYLSFISFVGSIFT), and 95 to 115 (PIALIMLILVSLIITLFAFYY).

Its subcellular location is the host membrane. The polypeptide is Putative transmembrane protein ORF119 (Acidianus convivator (ATV)).